Consider the following 476-residue polypeptide: Calcium/calmodulin-dependent protein kinase type 1G (476 aa).

In terms of domain architecture, Protein kinase spans 23–277 (FIFMEVLGSG…CEKALRHPWI (255 aa)). ATP-binding positions include 29–37 (LGSGAFSEV) and K52. The active-site Proton acceptor is D143. The interval 277–317 (IDGNTALHRDIYPSVSLQIQKNFAKSKWRQAFNAAAVVHHM) is autoinhibitory domain. The tract at residues 297–318 (KNFAKSKWRQAFNAAAVVHHMR) is calmodulin-binding. The interval 326-387 (SPSVRQEVEN…SSRPSAPGGR (62 aa)) is disordered.

The protein belongs to the protein kinase superfamily. CAMK Ser/Thr protein kinase family. CaMK subfamily. Prenylated on Cys-473.

It is found in the cytoplasm. The protein resides in the golgi apparatus membrane. Its subcellular location is the cell membrane. It catalyses the reaction L-seryl-[protein] + ATP = O-phospho-L-seryl-[protein] + ADP + H(+). The enzyme catalyses L-threonyl-[protein] + ATP = O-phospho-L-threonyl-[protein] + ADP + H(+). Its activity is regulated as follows. Activated by Ca(2+)/calmodulin. Binding of calmodulin is thought to result in a conformational change and leads to activation through phosphorylation by CAMKK1. Its function is as follows. Calcium/calmodulin-dependent protein kinase belonging to a proposed calcium-triggered signaling cascade. In vitro phosphorylates transcription factor CREB1. This Rattus norvegicus (Rat) protein is Calcium/calmodulin-dependent protein kinase type 1G (Camk1g).